We begin with the raw amino-acid sequence, 64 residues long: Large ribosomal subunit protein bL35 (64 aa).

Over residues methionine 1–arginine 15 the composition is skewed to basic residues. A disordered region spans residues methionine 1–glycine 20.

It belongs to the bacterial ribosomal protein bL35 family.

The chain is Large ribosomal subunit protein bL35 from Nocardioides sp. (strain ATCC BAA-499 / JS614).